Consider the following 114-residue polypeptide: FK506-binding protein 1 (114 aa).

Residues 26–114 enclose the PPIase FKBP-type domain; the sequence is GDLVTIHYTG…IFDVELLKVN (89 aa).

It belongs to the FKBP-type PPIase family. FKBP1 subfamily.

Its subcellular location is the cytoplasm. It catalyses the reaction [protein]-peptidylproline (omega=180) = [protein]-peptidylproline (omega=0). With respect to regulation, inhibited by both FK506 and rapamycin. PPIases accelerate the folding of proteins. It catalyzes the cis-trans isomerization of proline imidic peptide bonds in oligopeptides. This Candida glabrata (strain ATCC 2001 / BCRC 20586 / JCM 3761 / NBRC 0622 / NRRL Y-65 / CBS 138) (Yeast) protein is FK506-binding protein 1 (FPR1).